Here is a 680-residue protein sequence, read N- to C-terminus: HEAT repeat-containing protein 3 (680 aa).

Residues 1–11 show a composition bias toward basic residues; sequence MGKSRTKRFKR. Residues 1 to 39 form a disordered region; that stretch reads MGKSRTKRFKRPQFSPTGDCQAEAAAAANGTGGEEDDGP. S15 carries the phosphoserine modification. Positions 18 to 29 are enriched in low complexity; sequence GDCQAEAAAAAN. HEAT repeat units lie at residues 38–69 and 74–110; these read GPAAELLEKLQHPSAEVRECACAGLARLVQQR and GLARRDAVRRLGPLLLDPSLAVRETAAGALRNLSACG. S144 carries the post-translational modification Phosphoserine. T340 carries the phosphothreonine modification.

Belongs to the nuclear import and ribosome assembly adapter family. In terms of assembly, component of a hexameric 5S RNP precursor complex, composed of 5S RNA, RRS1, RPF2/BXDC1, RPL5, RPL11 and HEATR3; this complex acts as a precursor for ribosome assembly.

Its function is as follows. Plays a role in ribosome biogenesis and in nuclear import of the 60S ribosomal protein L5/large ribosomal subunit protein uL18 (RPL5). Required for proper erythrocyte maturation. The polypeptide is HEAT repeat-containing protein 3 (HEATR3) (Homo sapiens (Human)).